Reading from the N-terminus, the 332-residue chain is Large ribosomal subunit protein uL29m (332 aa).

The tract at residues 19–40 is disordered; sequence RFTKPKPKPAKRENVRLPTQRT. Positions 264–327 form a coiled coil; the sequence is TSENTESAIA…IQLQEEDAKN (64 aa).

The protein belongs to the universal ribosomal protein uL29 family. As to quaternary structure, component of the mitochondrial large ribosomal subunit. Mature mitochondrial ribosomes consist of a small (37S) and a large (54S) subunit. The 37S subunit contains at least 33 different proteins and 1 molecule of RNA (15S). The 54S subunit contains at least 45 different proteins and 1 molecule of RNA (21S).

It is found in the mitochondrion. The sequence is that of Large ribosomal subunit protein uL29m (MRPL4) from Kluyveromyces lactis (strain ATCC 8585 / CBS 2359 / DSM 70799 / NBRC 1267 / NRRL Y-1140 / WM37) (Yeast).